The primary structure comprises 151 residues: Small ribosomal subunit protein uS15 (151 aa).

It belongs to the universal ribosomal protein uS15 family. As to quaternary structure, component of the small ribosomal subunit. Part of the small subunit (SSU) processome, composed of more than 70 proteins and the RNA chaperone small nucleolar RNA (snoRNA) U3.

It localises to the cytoplasm. Its subcellular location is the nucleus. The protein resides in the nucleolus. In terms of biological role, component of the small ribosomal subunit. The ribosome is a large ribonucleoprotein complex responsible for the synthesis of proteins in the cell. Part of the small subunit (SSU) processome, first precursor of the small eukaryotic ribosomal subunit. During the assembly of the SSU processome in the nucleolus, many ribosome biogenesis factors, an RNA chaperone and ribosomal proteins associate with the nascent pre-rRNA and work in concert to generate RNA folding, modifications, rearrangements and cleavage as well as targeted degradation of pre-ribosomal RNA by the RNA exosome. This is Small ribosomal subunit protein uS15 (rps-13) from Caenorhabditis elegans.